A 163-amino-acid chain; its full sequence is Dual specificity phosphatase 28 (163 aa).

The Tyrosine-protein phosphatase domain maps to proline 10–alanine 151. Cysteine 95 functions as the Phosphocysteine intermediate in the catalytic mechanism.

The protein belongs to the protein-tyrosine phosphatase family. Non-receptor class dual specificity subfamily. In terms of assembly, monomer.

It catalyses the reaction O-phospho-L-tyrosyl-[protein] + H2O = L-tyrosyl-[protein] + phosphate. The enzyme catalyses O-phospho-L-seryl-[protein] + H2O = L-seryl-[protein] + phosphate. The catalysed reaction is O-phospho-L-threonyl-[protein] + H2O = L-threonyl-[protein] + phosphate. In terms of biological role, has phosphatase activity with the synthetic substrate 6,8-difluoro-4-methylumbelliferyl phosphate (in vitro). Has almost no detectable activity with phosphotyrosine, even less activity with phosphothreonine and displays complete lack of activity with phosphoserine. The poor activity with phosphotyrosine may be due to steric hindrance by bulky amino acid sidechains that obstruct access to the active site. The polypeptide is Dual specificity phosphatase 28 (Dusp28) (Mus musculus (Mouse)).